Consider the following 1464-residue polypeptide: Nuclear pore complex protein NUP155 (1464 aa).

Ser2 carries the post-translational modification N-acetylserine.

Belongs to the non-repetitive/WGA-negative nucleoporin family. As to quaternary structure, part of the nuclear pore complex (NPC). The NPC has an eight-fold symmetrical structure comprising a central transport channel and two rings, the cytoplasmic and nuclear rings, to which eight filaments are attached. The cytoplasmic filaments have loose ends, while the nuclear filaments are joined in a distal ring, forming a nuclear basket. NPCs are highly dynamic in configuration and composition, and can be devided in 3 subcomplexes, the NUP62 subcomplex, the NUP107-160 subcomplex and the NUP93 subcomplex, containing approximately 30 different nucleoporin proteins.

The protein resides in the nucleus. It is found in the nuclear pore complex. Functionally, major component of the nuclear pore complex (NPC). The polypeptide is Nuclear pore complex protein NUP155 (Arabidopsis thaliana (Mouse-ear cress)).